We begin with the raw amino-acid sequence, 132 residues long: Phycocyanin PC645 alpha-1 subunit (132 aa).

The (2R,3E)-phycocyanobilin site is built by D54 and R68. Residues C70, Q76, Y77, and K92 each coordinate mesobiliverdin. 15,16-dihydrobiliverdin-binding residues include P123 and I125.

It belongs to the phycoerythrin family. In terms of assembly, heterotetramer of 2 different alpha chains and 2 identical beta chains which form 2 alpha-beta heterodimers within the heterotetramer. Post-translationally, contains two phycocyanobilin chromophores, one mesobiliverdin chromophore and one 15,16-dihydrobiliverdin chromophore with binding mediated by both the alpha and beta subunits.

Its subcellular location is the plastid. It is found in the chloroplast thylakoid membrane. Its function is as follows. Light-harvesting photosynthetic tetrapyrrole chromophore-protein from the phycobiliprotein complex. The protein is Phycocyanin PC645 alpha-1 subunit of Chroomonas sp. (strain CCMP270).